Reading from the N-terminus, the 96-residue chain is Small ribosomal subunit protein bS6 (96 aa).

The protein belongs to the bacterial ribosomal protein bS6 family.

Binds together with bS18 to 16S ribosomal RNA. The polypeptide is Small ribosomal subunit protein bS6 (Acidothermus cellulolyticus (strain ATCC 43068 / DSM 8971 / 11B)).